Here is a 362-residue protein sequence, read N- to C-terminus: Probable dual-specificity RNA methyltransferase RlmN (362 aa).

Residue Glu-105 is the Proton acceptor of the active site. Residues His-111–Asp-344 form the Radical SAM core domain. A disulfide bridge links Cys-118 with Cys-349. The [4Fe-4S] cluster site is built by Cys-125, Cys-129, and Cys-132. S-adenosyl-L-methionine-binding positions include Gly-175–Glu-176, Ser-207, Ser-230–His-232, and Asn-306. The S-methylcysteine intermediate role is filled by Cys-349.

Belongs to the radical SAM superfamily. RlmN family. [4Fe-4S] cluster is required as a cofactor.

Its subcellular location is the cytoplasm. It carries out the reaction adenosine(2503) in 23S rRNA + 2 reduced [2Fe-2S]-[ferredoxin] + 2 S-adenosyl-L-methionine = 2-methyladenosine(2503) in 23S rRNA + 5'-deoxyadenosine + L-methionine + 2 oxidized [2Fe-2S]-[ferredoxin] + S-adenosyl-L-homocysteine. It catalyses the reaction adenosine(37) in tRNA + 2 reduced [2Fe-2S]-[ferredoxin] + 2 S-adenosyl-L-methionine = 2-methyladenosine(37) in tRNA + 5'-deoxyadenosine + L-methionine + 2 oxidized [2Fe-2S]-[ferredoxin] + S-adenosyl-L-homocysteine. Specifically methylates position 2 of adenine 2503 in 23S rRNA and position 2 of adenine 37 in tRNAs. The protein is Probable dual-specificity RNA methyltransferase RlmN of Halalkalibacterium halodurans (strain ATCC BAA-125 / DSM 18197 / FERM 7344 / JCM 9153 / C-125) (Bacillus halodurans).